A 57-amino-acid chain; its full sequence is UPF0391 membrane protein RPC_2356 (57 aa).

2 helical membrane-spanning segments follow: residues 6–26 (WALI…TGIS) and 35–55 (ILFY…LTIF).

This sequence belongs to the UPF0391 family.

Its subcellular location is the cell membrane. In Rhodopseudomonas palustris (strain BisB18), this protein is UPF0391 membrane protein RPC_2356.